A 688-amino-acid polypeptide reads, in one-letter code: Glycine--tRNA ligase beta subunit (688 aa).

It belongs to the class-II aminoacyl-tRNA synthetase family. As to quaternary structure, tetramer of two alpha and two beta subunits.

The protein resides in the cytoplasm. The enzyme catalyses tRNA(Gly) + glycine + ATP = glycyl-tRNA(Gly) + AMP + diphosphate. The protein is Glycine--tRNA ligase beta subunit of Listeria monocytogenes serovar 1/2a (strain ATCC BAA-679 / EGD-e).